The primary structure comprises 298 residues: tRNA pseudouridine synthase B (298 aa).

The active-site Nucleophile is the aspartate 42.

The protein belongs to the pseudouridine synthase TruB family. Type 1 subfamily.

It catalyses the reaction uridine(55) in tRNA = pseudouridine(55) in tRNA. In terms of biological role, responsible for synthesis of pseudouridine from uracil-55 in the psi GC loop of transfer RNAs. This Mycobacterium tuberculosis (strain CDC 1551 / Oshkosh) protein is tRNA pseudouridine synthase B.